Reading from the N-terminus, the 97-residue chain is Large ribosomal subunit protein uL23 (97 aa).

This sequence belongs to the universal ribosomal protein uL23 family. Part of the 50S ribosomal subunit. Contacts protein L29, and trigger factor when it is bound to the ribosome.

Its function is as follows. One of the early assembly proteins it binds 23S rRNA. One of the proteins that surrounds the polypeptide exit tunnel on the outside of the ribosome. Forms the main docking site for trigger factor binding to the ribosome. The sequence is that of Large ribosomal subunit protein uL23 from Anaeromyxobacter sp. (strain Fw109-5).